The chain runs to 191 residues: UPF0149 protein VCM66_2399 (191 aa).

This sequence belongs to the UPF0149 family.

The sequence is that of UPF0149 protein VCM66_2399 from Vibrio cholerae serotype O1 (strain M66-2).